A 178-amino-acid polypeptide reads, in one-letter code: Conodipine-P3 (178 aa).

The first 24 residues, 1–24 (MKLLAPVLWAMAALGVTWLVAVDS), serve as a signal peptide directing secretion. P38 is modified (4-hydroxyproline). 2 positions are modified to 4-hydroxyproline; partial: P42 and P49. The active site involves H54. Positions 98–130 (KREVTSHRATSIAHSRLWKTALDQKSFLNRKAR) are cleaved as a propeptide — interchain peptide. Q131 carries the pyrrolidone carboxylic acid modification. P137 is subject to 4-hydroxyproline; partial.

It belongs to the phospholipase A2 family. Group IX subfamily. Heterodimer of an alpha and a beta chain; probably disulfide-linked. Requires Ca(2+) as cofactor. Expressed by the venom duct.

The protein localises to the secreted. It catalyses the reaction a 1,2-diacyl-sn-glycero-3-phosphocholine + H2O = a 1-acyl-sn-glycero-3-phosphocholine + a fatty acid + H(+). Functionally, catalyzes the calcium-dependent hydrolysis of the 2-acyl groups in 3-sn-phosphoglycerides. The protein is Conodipine-P3 of Conus purpurascens (Purple cone).